Reading from the N-terminus, the 247-residue chain is Bidirectional sugar transporter SWEET1 (247 aa).

The Extracellular portion of the chain corresponds to 1–6 (MNIAHT). The chain crosses the membrane as a helical span at residues 7–27 (IFGVFGNATALFLFLAPSITF). A MtN3/slv 1 domain is found at 7–94 (IFGVFGNATA…LIFLFYAPKK (88 aa)). At 28–41 (KRIIKNKSTEQFSG) the chain is on the cytoplasmic side. A helical membrane pass occupies residues 42 to 62 (IPYPMTLLNCLLSAWYGLPFV). The Extracellular segment spans residues 63–71 (SKDNTLVST). Residues 72-92 (INGTGAVIETVYVLIFLFYAP) form a helical membrane-spanning segment. Over 93–98 (KKEKIK) the chain is Cytoplasmic. The helical transmembrane segment at 99–119 (IFGIFSCVLAVFATVALVSLF) threads the bilayer. The Extracellular segment spans residues 120–127 (ALQGNGRK). The helical transmembrane segment at 128–148 (LFCGLAATVFSIIMYASPLSI) threads the bilayer. The MtN3/slv 2 domain occupies 130–213 (CGLAATVFSI…ILYFIYCGNK (84 aa)). Topologically, residues 149–162 (MRLVVKTKSVEFMP) are cytoplasmic. The chain crosses the membrane as a helical span at residues 163 to 183 (FFLSLFVFLCGTSWFVYGLIG). Topologically, residues 184–187 (RDPF) are extracellular. The chain crosses the membrane as a helical span at residues 188 to 208 (VAIPNGFGCALGTLQLILYFI). At 209 to 247 (YCGNKGEKSADAQKDEKSVEMKDDEKKQNVVNGKQDLQV) the chain is on the cytoplasmic side. The span at 221 to 236 (QKDEKSVEMKDDEKKQ) shows a compositional bias: basic and acidic residues. The tract at residues 221–247 (QKDEKSVEMKDDEKKQNVVNGKQDLQV) is disordered. A compositionally biased stretch (polar residues) spans 237–247 (NVVNGKQDLQV).

This sequence belongs to the SWEET sugar transporter family. As to quaternary structure, forms homooligomers and heterooligomers with SWEET9, SWEET11, SWEET13, SWEET15, SWEET16 and SWEET17. Mainly expressed in flowers.

It is found in the cell membrane. It localises to the endoplasmic reticulum membrane. Its function is as follows. Mediates both low-affinity uptake and efflux of sugar across the plasma membrane. Can transport glucose, and, to a lower extent, mannose, fructose and galactose. This Arabidopsis thaliana (Mouse-ear cress) protein is Bidirectional sugar transporter SWEET1.